We begin with the raw amino-acid sequence, 339 residues long: Dihydroorotate dehydrogenase (quinone) (339 aa).

Residues 64 to 68 (AGADK) and Thr-88 each bind FMN. A substrate-binding site is contributed by Lys-68. Residue 113–117 (NRNGF) participates in substrate binding. Residues Asn-141 and Asn-174 each coordinate FMN. Position 174 (Asn-174) interacts with substrate. The Nucleophile role is filled by Ser-177. Asn-179 serves as a coordination point for substrate. Residues Lys-219 and Thr-247 each contribute to the FMN site. A substrate-binding site is contributed by 248–249 (NT). FMN contacts are provided by residues Gly-270, Gly-299, and 320 to 321 (YS).

Belongs to the dihydroorotate dehydrogenase family. Type 2 subfamily. Monomer. The cofactor is FMN.

Its subcellular location is the cell membrane. It carries out the reaction (S)-dihydroorotate + a quinone = orotate + a quinol. Its pathway is pyrimidine metabolism; UMP biosynthesis via de novo pathway; orotate from (S)-dihydroorotate (quinone route): step 1/1. In terms of biological role, catalyzes the conversion of dihydroorotate to orotate with quinone as electron acceptor. The chain is Dihydroorotate dehydrogenase (quinone) from Haemophilus influenzae (strain PittGG).